The following is a 270-amino-acid chain: Replication protein A 32 kDa subunit (270 aa).

At Met-1 the chain carries N-acetylmethionine. Ser-4 and Ser-8 each carry phosphoserine; by PRKDC. Thr-21 is subject to Phosphothreonine; by PRKDC. Positions 21–40 (TQSPGGFGSPAPSQAEKKSR) are disordered. Residue Ser-23 is modified to Phosphoserine; by CDK2. Position 29 is a phosphoserine; by CDK1 (Ser-29). Ser-33 bears the Phosphoserine; by PRKDC mark. Residues Lys-37 and Lys-38 each participate in a glycyl lysine isopeptide (Lys-Gly) (interchain with G-Cter in ubiquitin) cross-link. A DNA-binding region (OB) is located at residues 74–148 (VTIVGIIRHA…KSLVAFKIMP (75 aa)). The interaction with RAD52, TIPIN, UNG and XPA stretch occupies residues 187 to 270 (GMSEAGNFGG…DDHFKSTDAE (84 aa)).

This sequence belongs to the replication factor A protein 2 family. In terms of assembly, component of the replication protein A complex (RPA/RP-A), a heterotrimeric complex composed of RPA1, RPA2 and RPA3. Interacts with PRPF19; the PRP19-CDC5L complex is recruited to the sites of DNA repair where it ubiquitinates the replication protein A complex (RPA). Interacts with SERTAD3. Interacts with TIPIN. Interacts with TIMELESS. Interacts with PPP4R2; the interaction is direct, DNA damage-dependent and mediates the recruitment of the PP4 catalytic subunit PPP4C. Interacts (hyperphosphorylated) with RAD51. Interacts with SMARCAL1; the interaction is direct and mediates the recruitment to the RPA complex of SMARCAL1. Interacts with RAD52 and XPA; those interactions are direct and associate RAD52 and XPA to the RPA complex. Interacts with FBH1. Interacts with ETAA1; the interaction is direct and promotes ETAA1 recruitment at stalled replication forks. Interacts with DDI2. Interacts (in unphosphorylated form via N-terminus) with EIF4EBP3; the interaction enhances EIF4EBP3-mediated inhibition of EIF4E-mediated mRNA nuclear export. Post-translationally, differentially phosphorylated throughout the cell cycle, becoming phosphorylated at the G1-S transition and dephosphorylated in late mitosis. Mainly phosphorylated at Ser-23 and Ser-29, by cyclin A-CDK2 and cyclin B-CDK1, respectively during DNA replication and mitosis. Dephosphorylation may require the serine/threonine-protein phosphatase 4. Phosphorylation at Ser-23 and Ser-29 is a prerequisite for further phosphorylation. Becomes hyperphosphorylated on additional residues including Ser-4, Ser-8, Thr-21 and Ser-33 in response to DNA damage. Hyperphosphorylation is mediated by ATM, ATR and PRKDC. Primarily recruited to DNA repair nuclear foci as a hypophosphorylated form it undergoes subsequent hyperphosphorylation, catalyzed by ATR. Hyperphosphorylation is required for RAD51 recruitment to chromatin and efficient DNA repair. Phosphorylation at Thr-21 depends upon RFWD3 presence. DNA damage-induced 'Lys-63'-linked polyubiquitination by PRPF19 mediates ATRIP recruitment to the RPA complex at sites of DNA damage and activation of ATR. Ubiquitinated by RFWD3 at stalled replication forks in response to DNA damage: ubiquitination by RFWD3 does not lead to degradation by the proteasome and promotes removal of the RPA complex from stalled replication forks, promoting homologous recombination.

The protein resides in the nucleus. It is found in the PML body. Its function is as follows. As part of the heterotrimeric replication protein A complex (RPA/RP-A), binds and stabilizes single-stranded DNA intermediates, that form during DNA replication or upon DNA stress. It prevents their reannealing and in parallel, recruits and activates different proteins and complexes involved in DNA metabolism. Thereby, it plays an essential role both in DNA replication and the cellular response to DNA damage. In the cellular response to DNA damage, the RPA complex controls DNA repair and DNA damage checkpoint activation. Through recruitment of ATRIP activates the ATR kinase a master regulator of the DNA damage response. It is required for the recruitment of the DNA double-strand break repair factors RAD51 and RAD52 to chromatin in response to DNA damage. Also recruits to sites of DNA damage proteins like XPA and XPG that are involved in nucleotide excision repair and is required for this mechanism of DNA repair. Also plays a role in base excision repair (BER) probably through interaction with UNG. Also recruits SMARCAL1/HARP, which is involved in replication fork restart, to sites of DNA damage. May also play a role in telomere maintenance. In Pongo abelii (Sumatran orangutan), this protein is Replication protein A 32 kDa subunit (RPA2).